The sequence spans 305 residues: Putative ankyrin repeat protein RF_0580 (305 aa).

ANK repeat units follow at residues 5–34 (YNKN…NIDE), 39–68 (RGET…SPNI), 72–101 (SGQT…NIDL), 107–136 (CGHS…DINS), 140–169 (FGAS…DVNA), 173–202 (YEDT…DVNI), and 206–235 (NNFT…TIKI).

This Rickettsia felis (strain ATCC VR-1525 / URRWXCal2) (Rickettsia azadi) protein is Putative ankyrin repeat protein RF_0580.